A 116-amino-acid polypeptide reads, in one-letter code: Putative gamma-glutamylcyclotransferase PH0828 (116 aa).

13-16 (YGTL) lines the substrate pocket. Catalysis depends on glutamate 76, which acts as the Proton acceptor.

It belongs to the gamma-glutamylcyclotransferase family.

Its function is as follows. Putative gamma-glutamylcyclotransferase. This Pyrococcus horikoshii (strain ATCC 700860 / DSM 12428 / JCM 9974 / NBRC 100139 / OT-3) protein is Putative gamma-glutamylcyclotransferase PH0828.